The sequence spans 328 residues: ABC transporter I family member 20 (328 aa).

One can recognise an ABC transporter domain in the interval 14-257 (VEISGLRFTY…SKKSLMRTVE (244 aa)). 55–62 (GSNGAGKT) contacts ATP. The disordered stretch occupies residues 263 to 295 (ERDEERKRRKERKANGLPEFETRTEESRVTGDP). The segment covering 282–291 (FETRTEESRV) has biased composition (basic and acidic residues).

The protein belongs to the ABC transporter superfamily. ABCI family.

It localises to the cytoplasm. This is ABC transporter I family member 20 (ABCI20) from Arabidopsis thaliana (Mouse-ear cress).